Reading from the N-terminus, the 435-residue chain is Protein GOLM2 (435 aa).

Met-1 carries the N-acetylmethionine modification. The Cytoplasmic portion of the chain corresponds to 1 to 14 (MVGFGANRRAGRLP). Residues 15-35 (SFVLVVLLVVIVVLAFNYWSI) traverse the membrane as a helical; Signal-anchor for type II membrane protein segment. Positions 35–194 (ISSRHVLLQE…DQFLQEQKET (160 aa)) form a coiled coil. The Lumenal segment spans residues 36–435 (SSRHVLLQEE…YGKQRFSDVL (400 aa)). Basic and acidic residues-rich tracts occupy residues 191–212 (QKET…DHGA) and 223–239 (DANK…PHGK). Disordered regions lie at residues 191 to 239 (QKET…PHGK) and 271 to 435 (PPVL…SDVL). A Phosphoserine modification is found at Ser-232. 2 stretches are compositionally biased toward polar residues: residues 282 to 294 (QTIS…QPLS) and 302 to 320 (HLNQ…SNPL). The segment covering 343–361 (ATRDRANDFHKLKQSRFFD) has biased composition (basic and acidic residues). Ser-365 is subject to Phosphoserine. Residues 398 to 417 (YNEEEDGDGGEEDVQDDEER) show a composition bias toward acidic residues. Over residues 425–435 (DYGKQRFSDVL) the composition is skewed to basic and acidic residues.

It belongs to the GOLM family.

Its subcellular location is the membrane. The sequence is that of Protein GOLM2 from Mus musculus (Mouse).